Here is a 570-residue protein sequence, read N- to C-terminus: Putative ABC transporter ATP-binding protein SAV2684 (570 aa).

ABC transporter domains are found at residues 6–247 (ISFK…GIRE) and 304–537 (LELN…ASLR). ATP contacts are provided by residues 40–47 (GASGSGKS) and 338–345 (GHNGAGKS).

The protein belongs to the ABC transporter superfamily.

It is found in the cell membrane. Functionally, probably part of an ABC transporter complex. Responsible for energy coupling to the transport system. This chain is Putative ABC transporter ATP-binding protein SAV2684, found in Staphylococcus aureus (strain Mu50 / ATCC 700699).